A 267-amino-acid polypeptide reads, in one-letter code: NAD kinase (267 aa).

Asp-52 functions as the Proton acceptor in the catalytic mechanism. NAD(+)-binding positions include 52–53 (DG), Arg-57, 121–122 (NE), Arg-132, Lys-150, Asp-152, 163–168 (TAYSLS), and Ala-187.

Belongs to the NAD kinase family. It depends on a divalent metal cation as a cofactor.

It localises to the cytoplasm. The enzyme catalyses NAD(+) + ATP = ADP + NADP(+) + H(+). Involved in the regulation of the intracellular balance of NAD and NADP, and is a key enzyme in the biosynthesis of NADP. Catalyzes specifically the phosphorylation on 2'-hydroxyl of the adenosine moiety of NAD to yield NADP. The polypeptide is NAD kinase (Fusobacterium nucleatum subsp. nucleatum (strain ATCC 25586 / DSM 15643 / BCRC 10681 / CIP 101130 / JCM 8532 / KCTC 2640 / LMG 13131 / VPI 4355)).